The sequence spans 333 residues: Large ribosomal subunit protein mL39 (333 aa).

Positions 56–122 (DKIEVRYLGL…QESCTLQLLN (67 aa)) constitute a TGS domain. Residues 311–333 (SKKPSPARLPNEPFEEQQQLQLS) are disordered.

Belongs to the mitochondrion-specific ribosomal protein mL39 family. In terms of assembly, component of the mitochondrial ribosome large subunit (39S) which comprises a 16S rRNA and about 50 distinct proteins.

It is found in the mitochondrion. The protein is Large ribosomal subunit protein mL39 (mRpL39) of Drosophila melanogaster (Fruit fly).